Here is a 158-residue protein sequence, read N- to C-terminus: Ribonuclease H (158 aa).

In terms of domain architecture, RNase H type-1 spans 3–144 (GLKQLLIFTD…CDTLAREAAE (142 aa)). 4 residues coordinate Mg(2+): Asp-12, Glu-50, Asp-72, and Asp-136.

Belongs to the RNase H family. As to quaternary structure, monomer. It depends on Mg(2+) as a cofactor.

Its subcellular location is the cytoplasm. The enzyme catalyses Endonucleolytic cleavage to 5'-phosphomonoester.. In terms of biological role, endonuclease that specifically degrades the RNA of RNA-DNA hybrids. The polypeptide is Ribonuclease H (Shewanella loihica (strain ATCC BAA-1088 / PV-4)).